The chain runs to 1407 residues: DNA-directed RNA polymerase subunit beta' (1407 aa).

Zn(2+) contacts are provided by C70, C72, C85, and C88. The Mg(2+) site is built by D460, D462, and D464. K972 is subject to N6-acetyllysine.

It belongs to the RNA polymerase beta' chain family. In terms of assembly, the RNAP catalytic core consists of 2 alpha, 1 beta, 1 beta' and 1 omega subunit. When a sigma factor is associated with the core the holoenzyme is formed, which can initiate transcription. Mg(2+) is required as a cofactor. It depends on Zn(2+) as a cofactor.

The catalysed reaction is RNA(n) + a ribonucleoside 5'-triphosphate = RNA(n+1) + diphosphate. Functionally, DNA-dependent RNA polymerase catalyzes the transcription of DNA into RNA using the four ribonucleoside triphosphates as substrates. This is DNA-directed RNA polymerase subunit beta' from Escherichia coli O6:K15:H31 (strain 536 / UPEC).